A 213-amino-acid chain; its full sequence is ATP synthase peripheral stalk subunit OSCP, mitochondrial (213 aa).

The N-terminal 23 residues, 1-23 (MAAPAASGLSRQVRSFSTSVVRP), are a transit peptide targeting the mitochondrion. The SIFI-degron signature appears at 5–23 (AASGLSRQVRSFSTSVVRP). N6-acetyllysine is present on residues lysine 54, lysine 60, lysine 70, and lysine 73. Lysine 90 is subject to N6-succinyllysine. An N6-acetyllysine; alternate mark is found at lysine 100, lysine 158, and lysine 162. 3 positions are modified to N6-succinyllysine; alternate: lysine 100, lysine 158, and lysine 162. Residues lysine 172, lysine 176, and lysine 192 each carry the N6-acetyllysine modification. N6-succinyllysine is present on lysine 199.

This sequence belongs to the ATPase delta chain family. As to quaternary structure, component of the ATP synthase complex composed at least of ATP5F1A/subunit alpha, ATP5F1B/subunit beta, ATP5MC1/subunit c (homooctomer), MT-ATP6/subunit a, MT-ATP8/subunit 8, ATP5ME/subunit e, ATP5MF/subunit f, ATP5MG/subunit g, ATP5MK/subunit k, ATP5MJ/subunit j, ATP5F1C/subunit gamma, ATP5F1D/subunit delta, ATP5F1E/subunit epsilon, ATP5PF/subunit F6, ATP5PB/subunit b, ATP5PD/subunit d, ATP5PO/subunit OSCP. ATP synthase complex consists of a soluble F(1) head domain (subunits alpha(3) and beta(3)) - the catalytic core - and a membrane F(0) domain - the membrane proton channel (subunits c, a, 8, e, f, g, k and j). These two domains are linked by a central stalk (subunits gamma, delta, and epsilon) rotating inside the F1 region and a stationary peripheral stalk (subunits F6, b, d, and OSCP). Acetylation of Lys-70 and Lys-158 is observed in liver mitochondria from fasted mice but not from fed mice. Post-translationally, acetylation at Lys-162 decreases ATP production. Deacetylated by SIRT3. In terms of processing, in response to mitochondrial stress, the precursor protein is ubiquitinated by the SIFI complex in the cytoplasm before mitochondrial import, leading to its degradation. Within the SIFI complex, UBR4 initiates ubiquitin chain that are further elongated or branched by KCMF1.

The protein resides in the mitochondrion. Its subcellular location is the mitochondrion inner membrane. Its function is as follows. Subunit OSCP, of the mitochondrial membrane ATP synthase complex (F(1)F(0) ATP synthase or Complex V) that produces ATP from ADP in the presence of a proton gradient across the membrane which is generated by electron transport complexes of the respiratory chain. ATP synthase complex consist of a soluble F(1) head domain - the catalytic core - and a membrane F(1) domain - the membrane proton channel. These two domains are linked by a central stalk rotating inside the F(1) region and a stationary peripheral stalk. During catalysis, ATP synthesis in the catalytic domain of F(1) is coupled via a rotary mechanism of the central stalk subunits to proton translocation. In vivo, can only synthesize ATP although its ATP hydrolase activity can be activated artificially in vitro. Part of the complex F(0) domain. Part of the complex F(0) domain and the peripheric stalk, which acts as a stator to hold the catalytic alpha(3)beta(3) subcomplex and subunit a/ATP6 static relative to the rotary elements. The polypeptide is ATP synthase peripheral stalk subunit OSCP, mitochondrial (Mus musculus (Mouse)).